The primary structure comprises 336 residues: Dihydroorotate dehydrogenase (quinone) (336 aa).

FMN is bound by residues Ala-62–Lys-66 and Thr-86. Substrate is bound at residue Lys-66. Residue Asn-111–Phe-115 participates in substrate binding. Residues Asn-139 and Asn-172 each contribute to the FMN site. Substrate is bound at residue Asn-172. Ser-175 acts as the Nucleophile in catalysis. A substrate-binding site is contributed by Asn-177. Residues Lys-217 and Thr-245 each coordinate FMN. A substrate-binding site is contributed by Asn-246–Thr-247. FMN contacts are provided by residues Gly-268, Gly-297, and Tyr-318–Ser-319.

This sequence belongs to the dihydroorotate dehydrogenase family. Type 2 subfamily. As to quaternary structure, monomer. FMN is required as a cofactor.

The protein resides in the cell membrane. The catalysed reaction is (S)-dihydroorotate + a quinone = orotate + a quinol. The protein operates within pyrimidine metabolism; UMP biosynthesis via de novo pathway; orotate from (S)-dihydroorotate (quinone route): step 1/1. Functionally, catalyzes the conversion of dihydroorotate to orotate with quinone as electron acceptor. This is Dihydroorotate dehydrogenase (quinone) from Pectobacterium carotovorum subsp. carotovorum (strain PC1).